Here is a 109-residue protein sequence, read N- to C-terminus: Flagellar hook-basal body complex protein FliE (109 aa).

A disordered region spans residues 1 to 38; the sequence is MQAIHNDKSLLSPFSELNTDNRTKREESGNAFKEQKGG. The span at 19–38 shows a compositional bias: basic and acidic residues; sequence TDNRTKREESGNAFKEQKGG.

The protein belongs to the FliE family.

Its subcellular location is the bacterial flagellum basal body. The sequence is that of Flagellar hook-basal body complex protein FliE from Helicobacter pylori (strain G27).